Reading from the N-terminus, the 324-residue chain is Glyoxylate/hydroxypyruvate reductase B (324 aa).

Active-site residues include Arg237 and Glu266. His285 functions as the Proton donor in the catalytic mechanism.

It belongs to the D-isomer specific 2-hydroxyacid dehydrogenase family. GhrB subfamily. Homodimer.

The protein localises to the cytoplasm. It catalyses the reaction glycolate + NADP(+) = glyoxylate + NADPH + H(+). It carries out the reaction (R)-glycerate + NAD(+) = 3-hydroxypyruvate + NADH + H(+). The catalysed reaction is (R)-glycerate + NADP(+) = 3-hydroxypyruvate + NADPH + H(+). Its function is as follows. Catalyzes the NADPH-dependent reduction of glyoxylate and hydroxypyruvate into glycolate and glycerate, respectively. The polypeptide is Glyoxylate/hydroxypyruvate reductase B (Escherichia coli O6:H1 (strain CFT073 / ATCC 700928 / UPEC)).